The sequence spans 297 residues: MRAPAKVNLHLGVGAPREDGFHPLVTVYQAVGLYDDVTARAAPDWSVGVGLPDWMDDDAVPLNGANIVDRAADLLAAHHGVERTGELHIAKAIPVAGGMAGGSADAAAALVALDRLWGLDTSDDDLLALAARLGSDVPFALLGGTALGTGRGEVVTPVQDRGTWWWVVVPSDTGLSTPEVYRHFDRMFPDAPSQPVPADALLGAIAAGDTWALADALHNDLEAAAIDLRPELGRLIERGEEAGALRGLVSGSGPTCVFLCGSADHARSLAADLSGAGHPVVLAANGPVAGAHLVSYA.

Lys-6 is a catalytic residue. 94–104 (PVAGGMAGGSA) is an ATP binding site. Asp-136 is a catalytic residue.

The protein belongs to the GHMP kinase family. IspE subfamily.

It carries out the reaction 4-CDP-2-C-methyl-D-erythritol + ATP = 4-CDP-2-C-methyl-D-erythritol 2-phosphate + ADP + H(+). It participates in isoprenoid biosynthesis; isopentenyl diphosphate biosynthesis via DXP pathway; isopentenyl diphosphate from 1-deoxy-D-xylulose 5-phosphate: step 3/6. Catalyzes the phosphorylation of the position 2 hydroxy group of 4-diphosphocytidyl-2C-methyl-D-erythritol. The sequence is that of 4-diphosphocytidyl-2-C-methyl-D-erythritol kinase from Nocardioides sp. (strain ATCC BAA-499 / JS614).